The chain runs to 968 residues: MPFTLGQRWISDTESELGLGTVVAVDARTVTLLFPSTGENRLYARSDSPVTRVMFNPGDTITSHDGWQMQVEEVKEENGLLTYIGTRLDTEESGVALREVFLDSKLVFSKPQDRLFAGQIDRMDRFALRYRARKYSSEQFRMPYSGLRGQRTSLIPHQLNIAHDVGRRHAPRVLLADEVGLGKTIEAGMILHQQLLSGAAERVLIIVPETLQHQWLVEMLRRFNLRFALFDDERYAEAQHDAYNPFDTEQLVICSLDFARRSKQRLEHLCEAEWDLLVVDEAHHLVWSEDAPSREYQAIEQLAEHVPGVLLLTATPEQLGMESHFARLRLLDPNRFHDFAQFVEEQKNYRPVADAVAMLLAGNKLSNDELNMLGEMIGEQDIEPLLQAANSNSEDAQSARQELVSMLMDRHGTSRVLFRNTRNGVKGFPKRELHTIKLPLPTQYQTAIKVSGIMGARKSAEDRARDMLYPERIYQEFEGDNATWWNFDPRVEWLMGYLTSHRSQKVLVICAKAATALQLEQVLREREGIRAAVFHEGMSIIERDRAAAWFAEEDTGAQVLLCSEIGSEGRNFQFASHMVMFDLPFNPDLLEQRIGRLDRIGQAHDIQIHVPYLEKTAQSVLVRWYHEGLDAFEHTCPTGRTIYDSVYNDLINYLASPDQTEGFDDLIKNCREQHEALKAQLEQGRDRLLEIHSNGGEKAQALAESIEEQDDDTNLIAFAMNLFDIIGINQDDRGDNMIVLTPSDHMLVPDFPGLSEDGITITFDREVALAREDAQFITWEHPLIRNGLDLILSGDTGSSTISLLKNKALPVGTLLVELIYVVEAQAPKQLQLNRFLPPTPVRMLLDKNGNNLAAQVEFETFNRQLNAVNRHTGSKLVNAVQQDVHAILQLGEAQIEKSARALIDAARNEADEKLSAELSRLEALRAVNPNIRDDELTAIESNRQQVMESLDQAGWRLDALRLIVVTHQ.

The Helicase ATP-binding domain occupies 164–334 (DVGRRHAPRV…FARLRLLDPN (171 aa)). 177 to 184 (DEVGLGKT) provides a ligand contact to ATP. Positions 280–283 (DEAH) match the DEAH box motif. Residues 490-662 (RVEWLMGYLT…YLASPDQTEG (173 aa)) form the Helicase C-terminal domain.

It belongs to the SNF2/RAD54 helicase family. RapA subfamily. As to quaternary structure, interacts with the RNAP. Has a higher affinity for the core RNAP than for the holoenzyme. Its ATPase activity is stimulated by binding to RNAP.

Functionally, transcription regulator that activates transcription by stimulating RNA polymerase (RNAP) recycling in case of stress conditions such as supercoiled DNA or high salt concentrations. Probably acts by releasing the RNAP, when it is trapped or immobilized on tightly supercoiled DNA. Does not activate transcription on linear DNA. Probably not involved in DNA repair. The polypeptide is RNA polymerase-associated protein RapA (Escherichia fergusonii (strain ATCC 35469 / DSM 13698 / CCUG 18766 / IAM 14443 / JCM 21226 / LMG 7866 / NBRC 102419 / NCTC 12128 / CDC 0568-73)).